We begin with the raw amino-acid sequence, 356 residues long: MSTIVQRQKEFNFFDLWDSFCAWITSTENRIYIGWFGVLSIPTLLAATTCFVLAFIAAPSVDMDGIREPIMGSLMDGNNLITAAVVPTSAAIGLHFYPIWEAASMDEWLYNGGPYQLIVLHFLIGIWCLLGRFWELSYRLGMRPWIAVAYSAPVIAATSVLLVYPIGQGSFSDGLPLGIAGTFHFMLAFQGDHNILMHPFHMLGVAGVFGGALLSSLHGSLVASTLIRNTDENESINGGYKLGQQQVTYKYLAGHNSFLGRLLIPTFASRNHRAFHFLLAALPTIGIWFAAMGVCSMAFNLNGLNFNHSILDSRGNVIRSDADILNRANIGLSVMHAPNVHNFPLVLSSGQPIPVS.

3 helical membrane-spanning segments follow: residues 32–49 (YIGW…AATT), 121–136 (HFLI…FWEL), and 145–159 (WIAV…AATS). Chlorophyll a is bound at residue histidine 121. [CaMn4O5] cluster-binding residues include aspartate 173 and aspartate 192. The helical transmembrane segment at 200-221 (FHMLGVAGVFGGALLSSLHGSL) threads the bilayer. Histidine 201 is a chlorophyll a binding site. Histidine 218 contacts a quinone. Positions 218 and 276 each coordinate Fe cation. Residues 278–292 (LLAALPTIGIWFAAM) traverse the membrane as a helical segment. Histidine 336 is a [CaMn4O5] cluster binding site.

Belongs to the reaction center PufL/M/PsbA/D family. PSII is composed of 1 copy each of membrane proteins PsbA, PsbB, PsbC, PsbD, PsbE, PsbF, PsbH, PsbI, PsbJ, PsbK, PsbL, PsbM, PsbT, PsbX, PsbY, PsbZ, Psb30/Ycf12, peripheral proteins PsbO, CyanoQ (PsbQ), PsbU, PsbV and a large number of cofactors. It forms dimeric complexes. Requires The D1/D2 heterodimer binds P680, chlorophylls that are the primary electron donor of PSII, and subsequent electron acceptors. It shares a non-heme iron and each subunit binds pheophytin, quinone, additional chlorophylls, carotenoids and lipids. D1 provides most of the ligands for the Mn4-Ca-O5 cluster of the oxygen-evolving complex (OEC). There is also a Cl(-1) ion associated with D1 and D2, which is required for oxygen evolution. The PSII complex binds additional chlorophylls, carotenoids and specific lipids. as cofactor. In terms of processing, tyr-164 forms a radical intermediate that is referred to as redox-active TyrZ, YZ or Y-Z.

It is found in the cellular thylakoid membrane. It carries out the reaction 2 a plastoquinone + 4 hnu + 2 H2O = 2 a plastoquinol + O2. Functionally, photosystem II (PSII) is a light-driven water:plastoquinone oxidoreductase that uses light energy to abstract electrons from H(2)O, generating O(2) and a proton gradient subsequently used for ATP formation. It consists of a core antenna complex that captures photons, and an electron transfer chain that converts photonic excitation into a charge separation. The D1/D2 (PsbA/PsbD) reaction center heterodimer binds P680, the primary electron donor of PSII as well as several subsequent electron acceptors. In Trichormus variabilis (strain ATCC 29413 / PCC 7937) (Anabaena variabilis), this protein is Photosystem II protein D1 4.